Here is an 823-residue protein sequence, read N- to C-terminus: Pentatricopeptide repeat-containing protein At4g33990 (823 aa).

PPR repeat units lie at residues Asn-85–Arg-115, Asp-116–Pro-151, Asp-152–Trp-183, Asp-184–Arg-214, Asp-215–Thr-249, Ser-252–Ser-280, Glu-281–Arg-311, Asp-312–Pro-346, Asp-347–Leu-381, Asp-383–Thr-413, Asp-414–Ala-448, Asn-450–Leu-484, Asp-485–Val-515, Asn-516–Pro-550, Asp-551–Asp-581, and Ser-587–Gln-617. Positions Ile-622–Asp-697 are type E motif. The interval Asn-698–Lys-728 is type E(+) motif. The type DYW motif stretch occupies residues Met-729–Trp-823.

The protein belongs to the PPR family. PCMP-H subfamily.

The sequence is that of Pentatricopeptide repeat-containing protein At4g33990 (EMB2758) from Arabidopsis thaliana (Mouse-ear cress).